We begin with the raw amino-acid sequence, 279 residues long: Small ribosomal subunit protein uS2 (279 aa).

Belongs to the universal ribosomal protein uS2 family. In terms of assembly, component of the small ribosomal subunit. Mature ribosomes consist of a small (40S) and a large (60S) subunit. The 40S subunit contains about 33 different proteins and 1 molecule of RNA (18S). The 60S subunit contains about 49 different proteins and 3 molecules of RNA (28S, 5.8S and 5S). Interacts with ribosomal protein S21.

The protein resides in the cytoplasm. Required for the assembly and/or stability of the 40S ribosomal subunit. Required for the processing of the 20S rRNA-precursor to mature 18S rRNA in a late step of the maturation of 40S ribosomal subunits. In Schistosoma japonicum (Blood fluke), this protein is Small ribosomal subunit protein uS2.